Here is a 362-residue protein sequence, read N- to C-terminus: MVETKSIAPEFKKYLKFDSNNSNIRVGVAMSGGVDSSTVAYLLKQQGYDIFGVTMKTFKDEDSDAKKVCDDLGIEHYILDVRDEFKEKVVDYFVNEYMNGRTPNPCMVCNRYIKFGKMLDFILSKDASFMATGHYTKLKNGLLSVGDDSNKDQVYFLSQIEKNKLSKIIFPVGDLEKTKLRELAEQLGVRVYSKKDSQEICFVDDGKLKQFLIENTKGKAEKPGNIVDKNGNILGKHKGFSFYTIGQRKGLGISSEEPLYVLAFDRKTNNIIVGQNEDLFRDELIATRLNLFSVSSLEGLDNLECFAKTRSRDILHKCLLKKDGDNFQVKFIDNKVRAITPGQGIVFYNNDGNVIAGGFIEK.

ATP contacts are provided by residues 29–36 (AMSGGVDS) and Met-55. Cys-109 serves as the catalytic Nucleophile. Residues Cys-109 and Cys-201 are joined by a disulfide bond. Gly-133 contacts ATP. An interaction with tRNA region spans residues 151 to 153 (KDQ). Cys-201 serves as the catalytic Cysteine persulfide intermediate.

Belongs to the MnmA/TRMU family.

It is found in the cytoplasm. The enzyme catalyses S-sulfanyl-L-cysteinyl-[protein] + uridine(34) in tRNA + AH2 + ATP = 2-thiouridine(34) in tRNA + L-cysteinyl-[protein] + A + AMP + diphosphate + H(+). Functionally, catalyzes the 2-thiolation of uridine at the wobble position (U34) of tRNA, leading to the formation of s(2)U34. The protein is tRNA-specific 2-thiouridylase MnmA 1 of Fusobacterium nucleatum subsp. nucleatum (strain ATCC 25586 / DSM 15643 / BCRC 10681 / CIP 101130 / JCM 8532 / KCTC 2640 / LMG 13131 / VPI 4355).